The following is a 499-amino-acid chain: L-arabinose isomerase (499 aa).

Positions 306, 333, 350, and 449 each coordinate Mn(2+).

It belongs to the arabinose isomerase family. The cofactor is Mn(2+).

The enzyme catalyses beta-L-arabinopyranose = L-ribulose. Its pathway is carbohydrate degradation; L-arabinose degradation via L-ribulose; D-xylulose 5-phosphate from L-arabinose (bacterial route): step 1/3. Its function is as follows. Catalyzes the conversion of L-arabinose to L-ribulose. The protein is L-arabinose isomerase of Aeromonas salmonicida (strain A449).